Here is a 262-residue protein sequence, read N- to C-terminus: tRNA U34 carboxymethyltransferase (262 aa).

Carboxy-S-adenosyl-L-methionine contacts are provided by residues Lys25, Trp39, Lys44, Gly63, 114 to 115, Tyr135, and Arg250; that span reads VE.

It belongs to the class I-like SAM-binding methyltransferase superfamily. CmoB family. As to quaternary structure, homotetramer.

The catalysed reaction is carboxy-S-adenosyl-L-methionine + 5-hydroxyuridine(34) in tRNA = 5-carboxymethoxyuridine(34) in tRNA + S-adenosyl-L-homocysteine + H(+). Functionally, catalyzes carboxymethyl transfer from carboxy-S-adenosyl-L-methionine (Cx-SAM) to 5-hydroxyuridine (ho5U) to form 5-carboxymethoxyuridine (cmo5U) at position 34 in tRNAs. This chain is tRNA U34 carboxymethyltransferase, found in Helicobacter acinonychis (strain Sheeba).